The primary structure comprises 369 residues: Anhydro-N-acetylmuramic acid kinase (369 aa).

12–19 provides a ligand contact to ATP; the sequence is GTSMDGVD.

It belongs to the anhydro-N-acetylmuramic acid kinase family.

It carries out the reaction 1,6-anhydro-N-acetyl-beta-muramate + ATP + H2O = N-acetyl-D-muramate 6-phosphate + ADP + H(+). It functions in the pathway amino-sugar metabolism; 1,6-anhydro-N-acetylmuramate degradation. The protein operates within cell wall biogenesis; peptidoglycan recycling. Functionally, catalyzes the specific phosphorylation of 1,6-anhydro-N-acetylmuramic acid (anhMurNAc) with the simultaneous cleavage of the 1,6-anhydro ring, generating MurNAc-6-P. Is required for the utilization of anhMurNAc either imported from the medium or derived from its own cell wall murein, and thus plays a role in cell wall recycling. The protein is Anhydro-N-acetylmuramic acid kinase of Shewanella sp. (strain ANA-3).